The primary structure comprises 862 residues: Transcription factor E2F7 (862 aa).

2 DNA-binding regions span residues 140–209 (RKQK…CWHG) and 279–364 (RKDK…KWIG). Disordered stretches follow at residues 561–592 (PGSDSPTLEETTMSKQERPTKRQLNDKDDAPL), 617–643 (TPEQLQHVSREEEYNTEPVTKHSNVGE), and 788–862 (KADS…SAGN). Positions 564 to 574 (DSPTLEETTMS) are enriched in polar residues. A compositionally biased stretch (basic and acidic residues) spans 575 to 590 (KQERPTKRQLNDKDDA). 2 stretches are compositionally biased toward polar residues: residues 633–643 (EPVTKHSNVGE) and 832–851 (DVSSSRKPQRTQTRTSSSAQ).

Belongs to the E2F/DP family. In terms of assembly, homodimer and heterodimer: mainly forms homodimers and, to a lesser extent, heterodimers with e2f8.

The protein localises to the nucleus. In terms of biological role, atypical E2F transcription factor that participates in various processes such as angiogenesis and polyploidization of specialized cells. Mainly acts as a transcription repressor that binds DNA independently of DP proteins and specifically recognizes the E2 recognition site 5'-TTTC[CG]CGC-3'. Directly represses transcription of classical E2F transcription factors such as e2f1. Acts as a regulator of S-phase by recognizing and binding the E2-related site 5'-TTCCCGCC-3' and mediating repression of G1/S-regulated genes. Acts as a promoter of sprouting angiogenesis, possibly by acting as a transcription activator. The protein is Transcription factor E2F7 (e2f7) of Xenopus tropicalis (Western clawed frog).